A 363-amino-acid polypeptide reads, in one-letter code: Chorismate synthase (363 aa).

Residues R48 and R54 each coordinate NADP(+). FMN is bound by residues 125–127, 237–238, G277, 292–296, and R318; these read RSS, NA, and KPTSS.

It belongs to the chorismate synthase family. Homotetramer. FMNH2 is required as a cofactor.

It catalyses the reaction 5-O-(1-carboxyvinyl)-3-phosphoshikimate = chorismate + phosphate. It functions in the pathway metabolic intermediate biosynthesis; chorismate biosynthesis; chorismate from D-erythrose 4-phosphate and phosphoenolpyruvate: step 7/7. Catalyzes the anti-1,4-elimination of the C-3 phosphate and the C-6 proR hydrogen from 5-enolpyruvylshikimate-3-phosphate (EPSP) to yield chorismate, which is the branch point compound that serves as the starting substrate for the three terminal pathways of aromatic amino acid biosynthesis. This reaction introduces a second double bond into the aromatic ring system. The protein is Chorismate synthase of Ectopseudomonas mendocina (strain ymp) (Pseudomonas mendocina).